The following is a 276-amino-acid chain: Digeranylgeranylglyceryl phosphate synthase (276 aa).

8 helical membrane-spanning segments follow: residues 12 to 34, 38 to 60, 84 to 104, 107 to 127, 146 to 166, 202 to 222, 224 to 244, and 256 to 276; these read PHNC…GSVP, ILIL…NDYF, ALWY…LISL, FAFA…LKPL, GAIA…AFLV, VAAF…KAGV, VGYY…YLIL, and QLLL…AALM.

The protein belongs to the UbiA prenyltransferase family. DGGGP synthase subfamily. Mg(2+) serves as cofactor.

It localises to the cell membrane. The catalysed reaction is sn-3-O-(geranylgeranyl)glycerol 1-phosphate + (2E,6E,10E)-geranylgeranyl diphosphate = 2,3-bis-O-(geranylgeranyl)-sn-glycerol 1-phosphate + diphosphate. The protein operates within membrane lipid metabolism; glycerophospholipid metabolism. Functionally, prenyltransferase that catalyzes the transfer of the geranylgeranyl moiety of geranylgeranyl diphosphate (GGPP) to the C2 hydroxyl of (S)-3-O-geranylgeranylglyceryl phosphate (GGGP). This reaction is the second ether-bond-formation step in the biosynthesis of archaeal membrane lipids. In Thermococcus gammatolerans (strain DSM 15229 / JCM 11827 / EJ3), this protein is Digeranylgeranylglyceryl phosphate synthase.